The chain runs to 98 residues: NADH-ubiquinone oxidoreductase chain 4L (98 aa).

Transmembrane regions (helical) follow at residues 1–21 (MPYI…GMLI), 29–49 (SLLC…LTIL), and 61–81 (IILL…LVMV).

The protein belongs to the complex I subunit 4L family. Core subunit of respiratory chain NADH dehydrogenase (Complex I) which is composed of 45 different subunits.

It localises to the mitochondrion inner membrane. The catalysed reaction is a ubiquinone + NADH + 5 H(+)(in) = a ubiquinol + NAD(+) + 4 H(+)(out). Core subunit of the mitochondrial membrane respiratory chain NADH dehydrogenase (Complex I) which catalyzes electron transfer from NADH through the respiratory chain, using ubiquinone as an electron acceptor. Part of the enzyme membrane arm which is embedded in the lipid bilayer and involved in proton translocation. This chain is NADH-ubiquinone oxidoreductase chain 4L (MT-ND4L), found in Cephalopachus bancanus (Western tarsier).